The following is a 206-amino-acid chain: Thiamine-phosphate synthase (206 aa).

4-amino-2-methyl-5-(diphosphooxymethyl)pyrimidine-binding positions include 38 to 42 (QLRAK) and Asn70. Asp71 and Asp90 together coordinate Mg(2+). Residue Ser107 coordinates 4-amino-2-methyl-5-(diphosphooxymethyl)pyrimidine. 133-135 (TTT) provides a ligand contact to 2-[(2R,5Z)-2-carboxy-4-methylthiazol-5(2H)-ylidene]ethyl phosphate. Lys136 provides a ligand contact to 4-amino-2-methyl-5-(diphosphooxymethyl)pyrimidine. Residues Gly164 and 184 to 185 (VS) each bind 2-[(2R,5Z)-2-carboxy-4-methylthiazol-5(2H)-ylidene]ethyl phosphate.

Belongs to the thiamine-phosphate synthase family. Requires Mg(2+) as cofactor.

The enzyme catalyses 2-[(2R,5Z)-2-carboxy-4-methylthiazol-5(2H)-ylidene]ethyl phosphate + 4-amino-2-methyl-5-(diphosphooxymethyl)pyrimidine + 2 H(+) = thiamine phosphate + CO2 + diphosphate. The catalysed reaction is 2-(2-carboxy-4-methylthiazol-5-yl)ethyl phosphate + 4-amino-2-methyl-5-(diphosphooxymethyl)pyrimidine + 2 H(+) = thiamine phosphate + CO2 + diphosphate. It catalyses the reaction 4-methyl-5-(2-phosphooxyethyl)-thiazole + 4-amino-2-methyl-5-(diphosphooxymethyl)pyrimidine + H(+) = thiamine phosphate + diphosphate. The protein operates within cofactor biosynthesis; thiamine diphosphate biosynthesis; thiamine phosphate from 4-amino-2-methyl-5-diphosphomethylpyrimidine and 4-methyl-5-(2-phosphoethyl)-thiazole: step 1/1. Functionally, condenses 4-methyl-5-(beta-hydroxyethyl)thiazole monophosphate (THZ-P) and 2-methyl-4-amino-5-hydroxymethyl pyrimidine pyrophosphate (HMP-PP) to form thiamine monophosphate (TMP). This Herpetosiphon aurantiacus (strain ATCC 23779 / DSM 785 / 114-95) protein is Thiamine-phosphate synthase.